Here is a 568-residue protein sequence, read N- to C-terminus: Urease subunit alpha (568 aa).

In terms of domain architecture, Urease spans 130–568; the sequence is GGIDTHIHFI…LPMAQRYFLF (439 aa). 3 residues coordinate Ni(2+): His-135, His-137, and Lys-218. Lys-218 carries the N6-carboxylysine modification. His-220 is a binding site for substrate. Ni(2+)-binding residues include His-247 and His-273. The active-site Proton donor is the His-321. Residue Asp-361 participates in Ni(2+) binding.

This sequence belongs to the metallo-dependent hydrolases superfamily. Urease alpha subunit family. In terms of assembly, heterotrimer of UreA (gamma), UreB (beta) and UreC (alpha) subunits. Three heterotrimers associate to form the active enzyme. It depends on Ni cation as a cofactor. Post-translationally, carboxylation allows a single lysine to coordinate two nickel ions.

It is found in the cytoplasm. It carries out the reaction urea + 2 H2O + H(+) = hydrogencarbonate + 2 NH4(+). It participates in nitrogen metabolism; urea degradation; CO(2) and NH(3) from urea (urease route): step 1/1. The polypeptide is Urease subunit alpha (Burkholderia mallei (strain NCTC 10247)).